A 156-amino-acid chain; its full sequence is Large ribosomal subunit protein uL15 (156 aa).

Residues 1–44 (MKLNELRDNPGASPKRTRVGRGPGSGKGKMGGRGIKGQKSRSGV) form a disordered region. A compositionally biased stretch (gly residues) spans 21 to 35 (RGPGSGKGKMGGRGI).

This sequence belongs to the universal ribosomal protein uL15 family. In terms of assembly, part of the 50S ribosomal subunit.

Binds to the 23S rRNA. The polypeptide is Large ribosomal subunit protein uL15 (Ruegeria sp. (strain TM1040) (Silicibacter sp.)).